We begin with the raw amino-acid sequence, 274 residues long: Protein CIMAP1C (274 aa).

Residues 1 to 27 form a disordered region; that stretch reads MKLPKGTRSSVYFAQHPEKEPLPSRQE. The segment covering 16–27 has biased composition (basic and acidic residues); that stretch reads HPEKEPLPSRQE. STPGR repeat units follow at residues 199 to 224 and 235 to 260; these read PGPT…MAKR and PGPG…MGIK.

Belongs to the CIMAP family.

The sequence is that of Protein CIMAP1C from Homo sapiens (Human).